The sequence spans 692 residues: Elongation factor G (692 aa).

Positions glutamate 8 to leucine 282 constitute a tr-type G domain. Residues alanine 17–threonine 24, aspartate 81–histidine 85, and asparagine 135–aspartate 138 each bind GTP.

It belongs to the TRAFAC class translation factor GTPase superfamily. Classic translation factor GTPase family. EF-G/EF-2 subfamily.

Its subcellular location is the cytoplasm. Its function is as follows. Catalyzes the GTP-dependent ribosomal translocation step during translation elongation. During this step, the ribosome changes from the pre-translocational (PRE) to the post-translocational (POST) state as the newly formed A-site-bound peptidyl-tRNA and P-site-bound deacylated tRNA move to the P and E sites, respectively. Catalyzes the coordinated movement of the two tRNA molecules, the mRNA and conformational changes in the ribosome. This is Elongation factor G from Bacillus cereus (strain G9842).